Here is a 682-residue protein sequence, read N- to C-terminus: Actin-binding LIM protein 3 (682 aa).

The residue at position 1 (Met-1) is an N-acetylmethionine. 4 LIM zinc-binding domains span residues 21–80 (IQCY…LYGT), 80–140 (TRCD…MTSS), 149–208 (SHCA…QFGI), and 208–268 (IKCE…ARAE). Residues Ser-277, Ser-280, Ser-282, Ser-286, Ser-290, Ser-337, Ser-372, and Ser-373 each carry the phosphoserine modification. 2 disordered regions span residues 372–426 (SSPG…SYQA) and 440–475 (YRKPPIYKRHGDLSTATKSKTSEDISQASKYSPAYS). Tyr-376 is subject to Phosphotyrosine. Phosphoserine is present on residues Ser-379 and Ser-388. 3 stretches are compositionally biased toward polar residues: residues 380-393 (PTYSRQGMSPTFSR), 405-425 (GRSSPYHSQLDVRSSTPTSYQ), and 453-466 (STATKSKTSEDISQ). Phosphoserine is present on residues Ser-492, Ser-502, and Ser-503. Thr-542 is subject to Phosphothreonine. Ser-566, Ser-575, and Ser-606 each carry phosphoserine. In terms of domain architecture, HP spans 614-682 (MREYKIYPYE…NELKKQARLF (69 aa)). Residue Arg-630 is modified to Omega-N-methylarginine.

In terms of assembly, directly interacts with F-actin and ABRA. Expressed in heart, brain, lung and liver. In the brain, highly expressed in the olfactory bulb. In the hippocampus, expressed selectively in the CA2 and CA3 fields. In the cerebellum, expressed in internal granular cells.

It is found in the cytoplasm. Functionally, may act as scaffold protein. May stimulate ABRA activity and ABRA-dependent SRF transcriptional activity. The chain is Actin-binding LIM protein 3 (Ablim3) from Mus musculus (Mouse).